Here is a 434-residue protein sequence, read N- to C-terminus: Solute carrier RCH1 (434 aa).

Residues 1 to 15 (MKTQYSLIRKIWAHS) lie on the Cytoplasmic side of the membrane. A helical transmembrane segment spans residues 16–36 (VTEFLKSQWFFICLAILIVIA). The Extracellular segment spans residues 37 to 50 (RFAPNFARDGGLIK). Residues 51–71 (GQYSIGYGCVAWIFLQSGLGM) traverse the membrane as a helical segment. At 72-87 (KSRSLMANMLNWRAHA) the chain is on the cytoplasmic side. Residues 88-108 (TILVLSFLITSSIVYGFCCAV) traverse the membrane as a helical segment. Topologically, residues 109–118 (KAANDPKIDD) are extracellular. Residues 119–139 (WVLIGLILTATCPTTVASNVI) form a helical membrane-spanning segment. The Cytoplasmic portion of the chain corresponds to 140–149 (MTTNAGGNSL). A helical transmembrane segment spans residues 150–170 (LCVCEVFIGNLLGAFITPALV). Over 171-199 (QMFTNRAPFAYGNPATGNGIGALYGRVMK) the chain is Extracellular. Residues 200–220 (QVGLSVFVPLFVGQVIQNCFP) form a helical membrane-spanning segment. The Cytoplasmic segment spans residues 221–234 (KGTAYYLGFLKKYH). The chain crosses the membrane as a helical span at residues 235–255 (IKIGSYMLLLIMFSSFSTAFY). Topologically, residues 256–264 (QDAFTSVSH) are extracellular. A helical membrane pass occupies residues 265–285 (VCIIFLCFFNLGIYIFFTGLS). Topologically, residues 286 to 327 (YLCARPWFILKLFPHEPIEGKSTRLYRYSYNIFRPFYYSKED) are cytoplasmic. The chain crosses the membrane as a helical span at residues 328-348 (AICIMFCGPAKTAALGVSLIT). The Extracellular portion of the chain corresponds to 349-362 (SQYGDKKEHLGKLL). The helical transmembrane segment at 363–383 (VPLVLYQVEQVMTANFFVSLF) threads the bilayer. Residues 384 to 434 (KRWIQKDAQADGSESSCANENEEVDLEKIISIGTGENQSVLSNNVPYTQPR) lie on the Cytoplasmic side of the membrane. Ser425 carries the phosphoserine modification.

The protein belongs to the bile acid:sodium symporter (BASS) (TC 2.A.28) family.

It is found in the cell membrane. Its subcellular location is the bud neck. Its function is as follows. Solute carrier protein that negatively regulates the cytosolic calcium homeostasis in response to high levels of extracellular calcium. The sequence is that of Solute carrier RCH1 from Saccharomyces cerevisiae (strain ATCC 204508 / S288c) (Baker's yeast).